A 534-amino-acid polypeptide reads, in one-letter code: MEGVNSSSSISDLDELARLLDRPRVNIERKRSFDERSFSEMGIFDNVNSPGGWETPVSSARNSFEPHPMVAEAWDALRRSLVYFRGQPVGTIAAYDHATEEVLNYDQVFVRDFVPSALAFLMNGEPDIVKNFLLKTIQIQGREKRIDRFKLGEGAMPASFKVIHDPIKETDSINADFGESAIGRVAPVDSGFWWIILLRAYTKSTGDTSLAETSECQKGMRLILSLCLSEGFDTFPTLLCADGCSMIDRRMGVYGYPIEIQALFFMALRSAMSMLKHDAEGKEFMERIVKRLHALSFHMRSYFWLDFQQLNDIYRYKTEEYSHTAVNKFNVIPDSIPEWVFDFMPLRGGYFIGNVSPARMDFRWFALGNCVAILASLATPEQSASIMDLIEERWEELVGEMPVKICHPAIESHEWRIVTGCDPKNTRWSYHNGGSWPVLLWLLTAACIKTGRPQIARRAIDLAEARLLKDGWPEYYDGKSGRFIGKQARKFQTWSIAGYLVAKMLLEDPSHLGMISLEEDKQTKPVIKRSYSWT.

Phosphoserine occurs at positions 7 and 37. Threonine 55 is modified (phosphothreonine). Serine 532 is subject to Phosphoserine.

The protein belongs to the glycosyl hydrolase 100 family.

It catalyses the reaction Hydrolysis of terminal non-reducing beta-D-fructofuranoside residues in beta-D-fructofuranosides.. Functionally, invertase that cleaves sucrose into glucose and fructose. In Arabidopsis thaliana (Mouse-ear cress), this protein is Probable alkaline/neutral invertase D.